A 351-amino-acid polypeptide reads, in one-letter code: Flagellin (351 aa).

This sequence belongs to the bacterial flagellin family.

The protein localises to the secreted. Its subcellular location is the bacterial flagellum. Its function is as follows. Flagellin is the subunit protein which polymerizes to form the filaments of bacterial flagella. The sequence is that of Flagellin (fliC) from Serratia marcescens.